We begin with the raw amino-acid sequence, 435 residues long: Probable exopolygalacturonase B (435 aa).

A signal peptide spans 1-15; that stretch reads MKFFLATLFASAVSS. Asn-59, Asn-184, and Asn-224 each carry an N-linked (GlcNAc...) asparagine glycan. PbH1 repeat units lie at residues 208–239, 240–261, 262–283, 294–315, and 326–347; these read SKDV…DSLN, VDGL…SPKP, NTTN…SMGS, IEHA…RLKA, and INNI…VLDQ. Residue Asp-254 is the Proton donor of the active site. The cysteines at positions 256 and 273 are disulfide-linked. Asn-262 and Asn-274 each carry an N-linked (GlcNAc...) asparagine glycan. His-277 is an active-site residue. N-linked (GlcNAc...) asparagine glycosylation is found at Asn-301, Asn-328, Asn-365, and Asn-373. One copy of the PbH1 6 repeat lies at 366 to 388; that stretch reads VTNILFENISGTSSGKNGKVVAD. A disulfide bridge links Cys-391 with Cys-397. The N-linked (GlcNAc...) asparagine glycan is linked to Asn-406.

It belongs to the glycosyl hydrolase 28 family.

It is found in the secreted. It catalyses the reaction [(1-&gt;4)-alpha-D-galacturonosyl](n) + H2O = alpha-D-galacturonate + [(1-&gt;4)-alpha-D-galacturonosyl](n-1). Its function is as follows. Specific in hydrolyzing the terminal glycosidic bond of polygalacturonic acid and oligogalacturonates. This is Probable exopolygalacturonase B (pgxB) from Aspergillus oryzae (strain ATCC 42149 / RIB 40) (Yellow koji mold).